Reading from the N-terminus, the 446-residue chain is Glutamine synthetase (446 aa).

A GS beta-grasp domain is found at 14–107 (NNVKFLRFQF…IICDVYRKNG (94 aa)). The GS catalytic domain occupies 114-446 (PRGCLKRVLA…DWEFNKYVRI (333 aa)). Positions 138 and 140 each coordinate Mg(2+). Glu187 lines the ATP pocket. 2 residues coordinate Mg(2+): Glu192 and Glu199. L-glutamate-binding positions include 243 to 244 (NG) and Gly244. Residue His248 coordinates Mg(2+). Ser252 is a binding site for ATP. Arg301, Glu307, and Arg319 together coordinate L-glutamate. ATP-binding residues include Arg319, Arg324, and Lys331. A Mg(2+)-binding site is contributed by Glu336. Arg338 contacts L-glutamate.

Belongs to the glutamine synthetase family. As to quaternary structure, oligomer of 12 subunits arranged in the form of two hexagons. It depends on Mg(2+) as a cofactor.

It localises to the cytoplasm. It catalyses the reaction L-glutamate + NH4(+) + ATP = L-glutamine + ADP + phosphate + H(+). In terms of biological role, probably involved in nitrogen metabolism via ammonium assimilation. Catalyzes the ATP-dependent biosynthesis of glutamine from glutamate and ammonia. This is Glutamine synthetase from Methanococcus voltae.